The sequence spans 336 residues: Tyrosine recombinase XerC (336 aa).

The Core-binding (CB) domain occupies 14–106 (VANCRWLGEF…SVKSFYRFLL (93 aa)). Residues 127–330 (KIPDFLSEEE…TFNRLRDAYT (204 aa)) enclose the Tyr recombinase domain. Catalysis depends on residues Arg183, Lys207, His282, Arg285, and His308. The active-site O-(3'-phospho-DNA)-tyrosine intermediate is Tyr317.

It belongs to the 'phage' integrase family. XerC subfamily. As to quaternary structure, forms a cyclic heterotetrameric complex composed of two molecules of XerC and two molecules of XerD.

It localises to the cytoplasm. In terms of biological role, site-specific tyrosine recombinase, which acts by catalyzing the cutting and rejoining of the recombining DNA molecules. The XerC-XerD complex is essential to convert dimers of the bacterial chromosome into monomers to permit their segregation at cell division. It also contributes to the segregational stability of plasmids. The sequence is that of Tyrosine recombinase XerC from Chlorobaculum tepidum (strain ATCC 49652 / DSM 12025 / NBRC 103806 / TLS) (Chlorobium tepidum).